The sequence spans 77 residues: U8-lycotoxin-Ls1l (77 aa).

The signal sequence occupies residues 1 to 20 (MKLMIFTGLVLFAIVSLIEA). A propeptide spanning residues 21–26 (QAENEK) is cleaved from the precursor.

This sequence belongs to the neurotoxin 19 (CSTX) family. 08 (U8-Lctx) subfamily. Contains 4 disulfide bonds. As to expression, expressed by the venom gland.

The protein localises to the secreted. The sequence is that of U8-lycotoxin-Ls1l from Lycosa singoriensis (Wolf spider).